The primary structure comprises 105 residues: UPF0145 protein Aflv_1588 (105 aa).

This sequence belongs to the UPF0145 family.

In Anoxybacillus flavithermus (strain DSM 21510 / WK1), this protein is UPF0145 protein Aflv_1588.